An 884-amino-acid polypeptide reads, in one-letter code: MADAAVELPGRLAILPFRNKVLLPGAIVRIRCTNPSSVKLVEQELWQREEKGLIGVLPVHDSEAAGSLLSPGVGSDSGEGGSKAPGGSAGESTKQDTKNGKETIHWHSRGVAARALHLSRGVEKPSGRVTYIVVLEGLCRFSVQELSARGSYHVARVSRLDMTKTELEHAEQDPDLIALSRQFKATAMELISVLEQKQKTVGRTKVLLETVPVYRLADIFVASFEIGFEEQLSMLDSVDLKVRLSKATELVDRHLQSILVAEKITQKVEGQLSKSQKEFLLRQQMRAIKEELGDNDDDEDDVAALERKMQNAGMPANIWKHAQRELRRLRKMQPQQPGYSSSRTYLELLAELPWQKVSEERELDLRAAKESLDRDHYGLTKVKQRIIEYLAVRKLKPDARGPVLCFVGPPGVGKTSLASSIAKALNRKFIRISLGGVKDEADIRGHRRTYIGSMPGRLIDGLKRVSVSNPVMLLDEIDKTGSDVRGDPASALLEVLDPEQNKTFNDHYLNVPFDLSKVIFVATANRMQPIPPPLLDRMEVIELPGYTPEEKLKIAMKHLIPRVLEQHGLSSTYLQIPEAMVRLIIERYTREAGVRNLERNLAALARAAAVKVAEQDSALRLGKEIQPITTTLLDSRLADGGEVEMEVIPMGQDISNTYENPSPMIVDEAMLEKVLGPPRFDDSEAADRVASPGVSVGLVWTSFGGEVQFVEATAMVGKGDLHLTGQLGDVIKESAQLALTWVRARAADLNLSPTSDINLLESRDIHIHFPAGAVPKDGPSAGVTLVTSLVSLFSHRKVRADTAMTGEMTLRGLVLPVGGVKDKVLAAHRYGIKRVILPERNMKDLAEVPAPILSGLEILLVKRIEEVLDHAFEGGCPLRPHSKL.

In terms of domain architecture, Lon N-terminal spans 12 to 255 (LAILPFRNKV…KATELVDRHL (244 aa)). The disordered stretch occupies residues 67–101 (SLLSPGVGSDSGEGGSKAPGGSAGESTKQDTKNGK). Residues 75–89 (SDSGEGGSKAPGGSA) are compositionally biased toward gly residues. 408-415 (GPPGVGKT) serves as a coordination point for ATP. In terms of domain architecture, Lon proteolytic spans 689–874 (VASPGVSVGL…EEVLDHAFEG (186 aa)). Active-site residues include Ser780 and Lys823. A Microbody targeting signal motif is present at residues 882-884 (SKL).

Belongs to the peptidase S16 family.

Its subcellular location is the peroxisome matrix. The enzyme catalyses Hydrolysis of proteins in presence of ATP.. Functionally, ATP-dependent serine protease that mediates the selective degradation of misfolded and unassembled polypeptides in the peroxisomal matrix. Necessary for type 2 peroxisome targeting signal (PTS2)-containing protein processing and facilitates peroxisome matrix protein import. The chain is Lon protease homolog 2, peroxisomal from Oryza sativa subsp. japonica (Rice).